The sequence spans 86 residues: YcgL domain-containing protein XCC3997 (86 aa).

The YcgL domain maps to 1–83 (MHAYVYKSQR…PKTVVLAGEC (83 aa)).

This Xanthomonas campestris pv. campestris (strain ATCC 33913 / DSM 3586 / NCPPB 528 / LMG 568 / P 25) protein is YcgL domain-containing protein XCC3997.